Consider the following 702-residue polypeptide: Ribosomal RNA large subunit methyltransferase K/L (702 aa).

A THUMP domain is found at 43–154; sequence LVYQSLMWSR…KETASIALDL (112 aa).

It belongs to the methyltransferase superfamily. RlmKL family.

It localises to the cytoplasm. It carries out the reaction guanosine(2445) in 23S rRNA + S-adenosyl-L-methionine = N(2)-methylguanosine(2445) in 23S rRNA + S-adenosyl-L-homocysteine + H(+). The catalysed reaction is guanosine(2069) in 23S rRNA + S-adenosyl-L-methionine = N(2)-methylguanosine(2069) in 23S rRNA + S-adenosyl-L-homocysteine + H(+). Its function is as follows. Specifically methylates the guanine in position 2445 (m2G2445) and the guanine in position 2069 (m7G2069) of 23S rRNA. The protein is Ribosomal RNA large subunit methyltransferase K/L of Escherichia coli O6:K15:H31 (strain 536 / UPEC).